A 95-amino-acid polypeptide reads, in one-letter code: Succinate dehydrogenase membrane anchor subunit (95 aa).

Residues 1 to 19 (MYKTLLAQVFFHSIAKKKL) lie on the Mitochondrial matrix side of the membrane. A helical transmembrane segment spans residues 20 to 40 (YFFWLPRLFSLLLVPGFLFDI). Position 41 (Glu-41) is a topological domain, mitochondrial intermembrane. A helical membrane pass occupies residues 42-62 (ILFLFHPIILLHASLGLSVII). Residue His-53 participates in heme binding. The Mitochondrial matrix portion of the chain corresponds to 63–74 (EDYIHIETIKFQ). Tyr-65 serves as a coordination point for a ubiquinone. The chain crosses the membrane as a helical span at residues 75–95 (YLSLIKLLLVLLINLNILYLL).

Part of an enzyme complex containing four subunits: a flavoprotein, an iron-sulfur protein, plus two membrane-anchoring proteins. Heme serves as cofactor.

It localises to the mitochondrion inner membrane. Its pathway is carbohydrate metabolism; tricarboxylic acid cycle. Its function is as follows. Membrane-anchoring subunit of succinate dehydrogenase (SDH). This Porphyra purpurea (Red seaweed) protein is Succinate dehydrogenase membrane anchor subunit (SDH4).